Reading from the N-terminus, the 21-residue chain is Cyanophlyctin (21 aa).

Expressed by the skin glands.

Its subcellular location is the secreted. Functionally, has antibacterial activity against E.coli HP101BA (MIC=6.4 uM), K.pneumoniae PTCC1388 (MIC=7.3 uM), M.luteus PTCC1625 (MIC=4.7 uM) and S.aureus PTCC1431 (MIC=5.3 uM). Has no or very limited (&lt;3%) hemolytic activity at concentrations of 15 ug/ml and 60 ug/ml, respectively. The polypeptide is Cyanophlyctin (Euphlyctis cyanophlyctis (Skittering frog)).